The primary structure comprises 641 residues: Bifunctional enzyme NodQ (641 aa).

Positions M1 to Q458 are sulfate adenylyltransferase. Residues K22–T236 enclose the tr-type G domain. The G1 stretch occupies residues G31–S38. G31–S38 provides a ligand contact to GTP. Positions G89–D93 are G2. The tract at residues D110–G113 is G3. GTP is bound by residues D110–H114 and N165–D168. A G4 region spans residues N165 to D168. A G5 region spans residues S202 to R204. The interval L459–T641 is adenylyl-sulfate kinase. G467–S474 is an ATP binding site. The active-site Phosphoserine intermediate is the S541.

The protein in the C-terminal section; belongs to the APS kinase family. It in the N-terminal section; belongs to the TRAFAC class translation factor GTPase superfamily. Classic translation factor GTPase family. CysN/NodQ subfamily. In terms of assembly, sulfate-activating enzymes, NodP and NodQ, may be physically associated.

It carries out the reaction sulfate + ATP + H(+) = adenosine 5'-phosphosulfate + diphosphate. The enzyme catalyses adenosine 5'-phosphosulfate + ATP = 3'-phosphoadenylyl sulfate + ADP + H(+). Its function is as follows. Proposed to provide activated sulfate for transfer to Nod factor. ATP sulfurylase may be the GTPase, regulating ATP sulfurylase activity. APS kinase catalyzes the synthesis of activated sulfate. This chain is Bifunctional enzyme NodQ (nodQ), found in Rhizobium meliloti (strain 1021) (Ensifer meliloti).